The following is a 582-amino-acid chain: Aspartate--tRNA(Asp/Asn) ligase (582 aa).

Glutamate 177 is an L-aspartate binding site. Residues 201 to 204 (QLFK) form an aspartate region. Arginine 223 provides a ligand contact to L-aspartate. ATP-binding positions include 223–225 (RDE) and glutamine 232. Histidine 447 contacts L-aspartate. Residue glutamate 481 coordinates ATP. Residue arginine 488 participates in L-aspartate binding. Residue 533 to 536 (GLDR) coordinates ATP.

Belongs to the class-II aminoacyl-tRNA synthetase family. Type 1 subfamily. In terms of assembly, homodimer.

It is found in the cytoplasm. It carries out the reaction tRNA(Asx) + L-aspartate + ATP = L-aspartyl-tRNA(Asx) + AMP + diphosphate. Aspartyl-tRNA synthetase with relaxed tRNA specificity since it is able to aspartylate not only its cognate tRNA(Asp) but also tRNA(Asn). Reaction proceeds in two steps: L-aspartate is first activated by ATP to form Asp-AMP and then transferred to the acceptor end of tRNA(Asp/Asn). This Chlamydia trachomatis serovar A (strain ATCC VR-571B / DSM 19440 / HAR-13) protein is Aspartate--tRNA(Asp/Asn) ligase.